The primary structure comprises 293 residues: Large ribosomal subunit protein uL4c (293 aa).

The transit peptide at 1–50 directs the protein to the chloroplast; it reads MATSTSSSLSLSFFSSSLFSSKSRNFSSKPILKLPSSSHSQTSLSLSIKS. Disordered stretches follow at residues 107 to 138 and 259 to 293; these read EVRG…PGGG and YGVD…EPAE. Positions 116-126 are enriched in basic residues; that stretch reads YPQKKTGRARR. Residues 263–293 show a composition bias toward acidic residues; sequence TLEDEDEEEEEEEEGEEVDDGVEDGTPEPAE.

Belongs to the universal ribosomal protein uL4 family. As to quaternary structure, component of the chloroplast large ribosomal subunit (LSU). Mature 70S chloroplast ribosomes of higher plants consist of a small (30S) and a large (50S) subunit. The 30S small subunit contains 1 molecule of ribosomal RNA (16S rRNA) and 24 different proteins. The 50S large subunit contains 3 rRNA molecules (23S, 5S and 4.5S rRNA) and 33 different proteins. Highly expressed in cotyledon and weakly in roots.

Its subcellular location is the plastid. It is found in the chloroplast. Functionally, component of the chloroplast ribosome (chloro-ribosome), a dedicated translation machinery responsible for the synthesis of chloroplast genome-encoded proteins, including proteins of the transcription and translation machinery and components of the photosynthetic apparatus. This chain is Large ribosomal subunit protein uL4c (RPL4), found in Spinacia oleracea (Spinach).